We begin with the raw amino-acid sequence, 158 residues long: Large ribosomal subunit protein bL19 (158 aa).

The span at 119–129 (SDRSRVMKDAA) shows a compositional bias: basic and acidic residues. A disordered region spans residues 119–158 (SDRSRVMKDAARAQQARDAAQGNSSSETQSSTAAVETQGE). Residues 130–139 (RAQQARDAAQ) show a composition bias toward low complexity. Residues 140 to 158 (GNSSSETQSSTAAVETQGE) show a composition bias toward polar residues.

This sequence belongs to the bacterial ribosomal protein bL19 family.

This protein is located at the 30S-50S ribosomal subunit interface and may play a role in the structure and function of the aminoacyl-tRNA binding site. The polypeptide is Large ribosomal subunit protein bL19 (Deinococcus geothermalis (strain DSM 11300 / CIP 105573 / AG-3a)).